Reading from the N-terminus, the 250-residue chain is uncharacterized protein (250 aa).

This sequence to class-3 of adenylyl cyclases.

This is an uncharacterized protein from Mycobacterium tuberculosis (strain ATCC 25618 / H37Rv).